A 904-amino-acid polypeptide reads, in one-letter code: Structural polyprotein (904 aa).

Disordered regions lie at residues 1-27 (ADQE…VETE), 35-54 (VETP…SARS), and 320-348 (NNSN…KIGP). A compositionally biased stretch (polar residues) spans 39 to 53 (NRINTPMAQDTSSAR). Residues 329–343 (VKEKTKNIPKPKTEN) are compositionally biased toward basic and acidic residues.

Belongs to the picornaviruses polyprotein family. Specific enzymatic cleavages in vivo yield mature proteins.

It localises to the virion. Its subcellular location is the host cytoplasm. Structural polyprotein: precursor of all the viral capsid proteins. Functionally, forms, together with protein VP2 and protein VP3, an icosahedral capsid protecting the viral RNA genome. The icosahedral capsid has a pseudo-T=3 symmetry with a diameter of approximately 300 Angstroms, and is composed of 60 copies of each capsid proteins. Its function is as follows. Forms, together with protein VP1 and protein VP3, an icosahedral capsid protecting the viral RNA genome. The icosahedral capsid has a pseudo-T=3 symmetry with a diameter of approximately 300 Angstroms, and is composed of 60 copies of each capsid proteins. In terms of biological role, forms, together with protein VP1 and protein VP2, an icosahedral capsid protecting the viral RNA genome. The icosahedral capsid has a pseudo-T=3 symmetry with a diameter of approximately 300 Angstroms, and is composed of 60 copies of each capsid proteins. This Apis mellifera (Honeybee) protein is Structural polyprotein.